A 379-amino-acid polypeptide reads, in one-letter code: Putative zinc metalloprotease BR1156/BS1330_I1152 (379 aa).

Residue His-33 coordinates Zn(2+). Glu-34 is an active-site residue. His-37 is a Zn(2+) binding site. 4 helical membrane passes run Leu-39 to Gly-61, Val-122 to Tyr-144, Phe-305 to Leu-327, and Ile-355 to Phe-377. The 76-residue stretch at Thr-133–Lys-208 folds into the PDZ domain.

It belongs to the peptidase M50B family. Zn(2+) is required as a cofactor.

The protein resides in the cell inner membrane. This chain is Putative zinc metalloprotease BR1156/BS1330_I1152, found in Brucella suis biovar 1 (strain 1330).